Reading from the N-terminus, the 241-residue chain is Carboxy-S-adenosyl-L-methionine synthase (241 aa).

Residues tyrosine 38, 63-65 (GCS), 88-89 (DN), 116-117 (DI), asparagine 131, and arginine 198 contribute to the S-adenosyl-L-methionine site.

Belongs to the class I-like SAM-binding methyltransferase superfamily. Cx-SAM synthase family. In terms of assembly, homodimer.

The enzyme catalyses prephenate + S-adenosyl-L-methionine = carboxy-S-adenosyl-L-methionine + 3-phenylpyruvate + H2O. Catalyzes the conversion of S-adenosyl-L-methionine (SAM) to carboxy-S-adenosyl-L-methionine (Cx-SAM). In Glaesserella parasuis serovar 5 (strain SH0165) (Haemophilus parasuis), this protein is Carboxy-S-adenosyl-L-methionine synthase.